The sequence spans 383 residues: Cytochrome b (383 aa).

A run of 4 helical transmembrane segments spans residues Phe35–Met55, Trp79–Ile100, Trp115–Leu135, and Phe180–Phe200. 2 residues coordinate heme b: His85 and His99. Positions 184 and 198 each coordinate heme b. A ubiquinone is bound at residue His203. 4 helical membrane passes run Ile228–Phe248, Leu290–Asn310, Leu321–Lys341, and Phe348–Tyr368.

It belongs to the cytochrome b family. In terms of assembly, the main subunits of complex b-c1 are: cytochrome b, cytochrome c1 and the Rieske protein. Requires heme b as cofactor.

It localises to the mitochondrion inner membrane. Its function is as follows. Component of the ubiquinol-cytochrome c reductase complex (complex III or cytochrome b-c1 complex) that is part of the mitochondrial respiratory chain. The b-c1 complex mediates electron transfer from ubiquinol to cytochrome c. Contributes to the generation of a proton gradient across the mitochondrial membrane that is then used for ATP synthesis. The chain is Cytochrome b (MT-CYB) from Apis mellifera ligustica (Common honeybee).